The primary structure comprises 936 residues: Phosphoenolpyruvate carboxylase (936 aa).

Residues 1–20 (MSSLNLSAGPEPVSERPDDA) form a disordered region. Catalysis depends on residues H164 and K598.

Belongs to the PEPCase type 1 family. Mg(2+) serves as cofactor.

The catalysed reaction is oxaloacetate + phosphate = phosphoenolpyruvate + hydrogencarbonate. Forms oxaloacetate, a four-carbon dicarboxylic acid source for the tricarboxylic acid cycle. The polypeptide is Phosphoenolpyruvate carboxylase (ppc) (Rhodopseudomonas palustris (strain ATCC BAA-98 / CGA009)).